The following is a 561-amino-acid chain: DNA ligase B (561 aa).

Lys-128 functions as the N6-AMP-lysine intermediate in the catalytic mechanism.

This sequence belongs to the NAD-dependent DNA ligase family. LigB subfamily.

The enzyme catalyses NAD(+) + (deoxyribonucleotide)n-3'-hydroxyl + 5'-phospho-(deoxyribonucleotide)m = (deoxyribonucleotide)n+m + AMP + beta-nicotinamide D-nucleotide.. In terms of biological role, catalyzes the formation of phosphodiester linkages between 5'-phosphoryl and 3'-hydroxyl groups in double-stranded DNA using NAD as a coenzyme and as the energy source for the reaction. The chain is DNA ligase B from Pseudomonas syringae pv. tomato (strain ATCC BAA-871 / DC3000).